The primary structure comprises 506 residues: MAP kinase kinase MKK2/SSP33 (506 aa).

The disordered stretch occupies residues 1-69 (MASMFRPPES…TSTTSSMASN (69 aa)). The segment covering 26–52 (LVQNAKSTNDGQHLNRSPYSSVNESPY) has biased composition (polar residues). Over residues 53–69 (SNNSTSATSTTSSMASN) the composition is skewed to low complexity. The region spanning 214 to 481 (ITTLGILGEG…PRQMLKHPWI (268 aa)) is the Protein kinase domain. Residues 220-228 (LGEGAGGSV) and lysine 243 contribute to the ATP site. The active-site Proton acceptor is aspartate 342.

This sequence belongs to the protein kinase superfamily. STE Ser/Thr protein kinase family. MAP kinase kinase subfamily.

It carries out the reaction L-seryl-[protein] + ATP = O-phospho-L-seryl-[protein] + ADP + H(+). It catalyses the reaction L-threonyl-[protein] + ATP = O-phospho-L-threonyl-[protein] + ADP + H(+). The enzyme catalyses L-tyrosyl-[protein] + ATP = O-phospho-L-tyrosyl-[protein] + ADP + H(+). Functionally, serine/threonine protein kinase involved in a signal transduction pathway that plays a role in yeast cell morphogenesis and cell growth. This pathway seems to start by SMP3; then involves the kinase PKC1 that may act on the BCK1 kinase that then phosphorylates MKK1 and MKK2 which themselves phosphorylate the MPK1 kinase. This Saccharomyces cerevisiae (strain ATCC 204508 / S288c) (Baker's yeast) protein is MAP kinase kinase MKK2/SSP33 (MKK2).